The following is a 219-amino-acid chain: 2-hydroxy-3-keto-5-methylthiopentenyl-1-phosphate phosphatase (219 aa).

This sequence belongs to the HAD-like hydrolase superfamily. MtnX family.

The catalysed reaction is 2-hydroxy-5-methylsulfanyl-3-oxopent-1-enyl phosphate + H2O = 1,2-dihydroxy-5-(methylsulfanyl)pent-1-en-3-one + phosphate. It participates in amino-acid biosynthesis; L-methionine biosynthesis via salvage pathway; L-methionine from S-methyl-5-thio-alpha-D-ribose 1-phosphate: step 4/6. Dephosphorylates 2-hydroxy-3-keto-5-methylthiopentenyl-1-phosphate (HK-MTPenyl-1-P) yielding 1,2-dihydroxy-3-keto-5-methylthiopentene (DHK-MTPene). This is 2-hydroxy-3-keto-5-methylthiopentenyl-1-phosphate phosphatase from Bacillus cereus (strain ZK / E33L).